We begin with the raw amino-acid sequence, 309 residues long: Elongation factor Ts (309 aa).

The involved in Mg(2+) ion dislocation from EF-Tu stretch occupies residues 82–85 (TDFV).

The protein belongs to the EF-Ts family.

The protein resides in the cytoplasm. In terms of biological role, associates with the EF-Tu.GDP complex and induces the exchange of GDP to GTP. It remains bound to the aminoacyl-tRNA.EF-Tu.GTP complex up to the GTP hydrolysis stage on the ribosome. This chain is Elongation factor Ts (tsf), found in Rickettsia prowazekii (strain Madrid E).